The chain runs to 422 residues: S-adenosylmethionine synthase (422 aa).

His-16 serves as a coordination point for ATP. Asp-18 is a binding site for Mg(2+). Residue Glu-44 participates in K(+) binding. Glu-57 and Gln-100 together coordinate L-methionine. Residues 100 to 110 are flexible loop; that stretch reads QSPDISQGVSA. Residues 175–177, 251–252, Asp-260, 266–267, Ala-283, and Lys-287 contribute to the ATP site; these read DGK, KF, and RK. Residue Asp-260 participates in L-methionine binding. An L-methionine-binding site is contributed by Lys-291.

The protein belongs to the AdoMet synthase family. As to quaternary structure, homotetramer; dimer of dimers. Mg(2+) is required as a cofactor. It depends on K(+) as a cofactor.

It is found in the cytoplasm. It catalyses the reaction L-methionine + ATP + H2O = S-adenosyl-L-methionine + phosphate + diphosphate. It participates in amino-acid biosynthesis; S-adenosyl-L-methionine biosynthesis; S-adenosyl-L-methionine from L-methionine: step 1/1. Functionally, catalyzes the formation of S-adenosylmethionine (AdoMet) from methionine and ATP. The overall synthetic reaction is composed of two sequential steps, AdoMet formation and the subsequent tripolyphosphate hydrolysis which occurs prior to release of AdoMet from the enzyme. The chain is S-adenosylmethionine synthase from Rippkaea orientalis (strain PCC 8801 / RF-1) (Cyanothece sp. (strain PCC 8801)).